Here is a 139-residue protein sequence, read N- to C-terminus: Putative pre-16S rRNA nuclease (139 aa).

Belongs to the YqgF nuclease family.

It is found in the cytoplasm. Could be a nuclease involved in processing of the 5'-end of pre-16S rRNA. This chain is Putative pre-16S rRNA nuclease, found in Phocaeicola vulgatus (strain ATCC 8482 / DSM 1447 / JCM 5826 / CCUG 4940 / NBRC 14291 / NCTC 11154) (Bacteroides vulgatus).